The primary structure comprises 336 residues: 4-hydroxythreonine-4-phosphate dehydrogenase (336 aa).

2 residues coordinate substrate: histidine 135 and threonine 136. The a divalent metal cation site is built by histidine 165, histidine 210, and histidine 265. Residues lysine 273, asparagine 282, and arginine 291 each contribute to the substrate site.

This sequence belongs to the PdxA family. As to quaternary structure, homodimer. Zn(2+) is required as a cofactor. Requires Mg(2+) as cofactor. Co(2+) serves as cofactor.

It is found in the cytoplasm. The catalysed reaction is 4-(phosphooxy)-L-threonine + NAD(+) = 3-amino-2-oxopropyl phosphate + CO2 + NADH. It functions in the pathway cofactor biosynthesis; pyridoxine 5'-phosphate biosynthesis; pyridoxine 5'-phosphate from D-erythrose 4-phosphate: step 4/5. In terms of biological role, catalyzes the NAD(P)-dependent oxidation of 4-(phosphooxy)-L-threonine (HTP) into 2-amino-3-oxo-4-(phosphooxy)butyric acid which spontaneously decarboxylates to form 3-amino-2-oxopropyl phosphate (AHAP). The polypeptide is 4-hydroxythreonine-4-phosphate dehydrogenase (Marinobacter nauticus (strain ATCC 700491 / DSM 11845 / VT8) (Marinobacter aquaeolei)).